The following is a 654-amino-acid chain: MICOS complex subunit MIC60-2 (654 aa).

Residues 1 to 12 constitute a mitochondrion transit peptide; that stretch reads MRGSRNLLTQRL. The Mitochondrial matrix portion of the chain corresponds to 13-20; the sequence is ASSRATGS. A helical transmembrane segment spans residues 21–43; it reads SGGLKFVGATVGAVTAGAAGVAG. Over 44 to 654 the chain is Mitochondrial intermembrane; sequence YASYDNEFRK…AALTSIRSTY (611 aa). The segment covering 115–129 has biased composition (basic and acidic residues); the sequence is LKETTEPKKIEKKPE. Positions 115–140 are disordered; the sequence is LKETTEPKKIEKKPENPYIGAKTPLN.

This sequence belongs to the MICOS complex subunit Mic60 family. Component of the mitochondrial contact site and cristae organizing system (MICOS) complex. Expressed in the gonads and muscle cells.

Its subcellular location is the mitochondrion inner membrane. The protein resides in the cytoplasm. In terms of biological role, sustains mitochondrial morphology probably through maintaining cristae morphology. May act as a component of the MICOS complex, a large protein complex of the mitochondria. This is MICOS complex subunit MIC60-2 from Caenorhabditis elegans.